A 365-amino-acid polypeptide reads, in one-letter code: Chorismate synthase (365 aa).

Residues arginine 48 and arginine 54 each contribute to the NADP(+) site. Residues 131–133, 243–244, glycine 288, 303–307, and arginine 329 each bind FMN; these read RSS, NA, and KPTSS.

This sequence belongs to the chorismate synthase family. In terms of assembly, homotetramer. Requires FMNH2 as cofactor.

The catalysed reaction is 5-O-(1-carboxyvinyl)-3-phosphoshikimate = chorismate + phosphate. It functions in the pathway metabolic intermediate biosynthesis; chorismate biosynthesis; chorismate from D-erythrose 4-phosphate and phosphoenolpyruvate: step 7/7. In terms of biological role, catalyzes the anti-1,4-elimination of the C-3 phosphate and the C-6 proR hydrogen from 5-enolpyruvylshikimate-3-phosphate (EPSP) to yield chorismate, which is the branch point compound that serves as the starting substrate for the three terminal pathways of aromatic amino acid biosynthesis. This reaction introduces a second double bond into the aromatic ring system. This is Chorismate synthase from Sinorhizobium fredii (strain NBRC 101917 / NGR234).